The following is a 218-amino-acid chain: Cytidylate kinase (218 aa).

An ATP-binding site is contributed by 11–19; sequence GPGASGKGT.

It belongs to the cytidylate kinase family. Type 1 subfamily.

The protein resides in the cytoplasm. It catalyses the reaction CMP + ATP = CDP + ADP. The enzyme catalyses dCMP + ATP = dCDP + ADP. The protein is Cytidylate kinase of Neisseria meningitidis serogroup A / serotype 4A (strain DSM 15465 / Z2491).